Consider the following 323-residue polypeptide: MTATTTAQPSGPVPPASPTAARRLLLVHAHPDDEVITTGATMAAYAAEGAHVTLVTCTAGEEGEVLVPELAHLAADREDRLAEIRVVELANAMTALGVADHRFLGGVGCYRDSGMMGTPANDKPHAFWRADLDEAAAHLVKVVREIRPQVLVTYDENGGYGHPDHIQAHRVAMRAAELAADPAFAPEHGAVWDVAKIYWTAMPESVLAEGIQALKEAGDTSGFIAVESVEDLSFGTDDALVTTTIDGTAYMENKREGMRAYPTQISMGQGFFALSNSIGMEFMAHEFYQLVKGAAEGSDTGLEKDLFAGLGIADGTAAGVSQG.

The Zn(2+) site is built by H30, D33, and H165.

The protein belongs to the MshB deacetylase family. Zn(2+) serves as cofactor.

It carries out the reaction 1D-myo-inositol 2-acetamido-2-deoxy-alpha-D-glucopyranoside + H2O = 1D-myo-inositol 2-amino-2-deoxy-alpha-D-glucopyranoside + acetate. In terms of biological role, catalyzes the deacetylation of 1D-myo-inositol 2-acetamido-2-deoxy-alpha-D-glucopyranoside (GlcNAc-Ins) in the mycothiol biosynthesis pathway. The sequence is that of 1D-myo-inositol 2-acetamido-2-deoxy-alpha-D-glucopyranoside deacetylase 1 from Catenulispora acidiphila (strain DSM 44928 / JCM 14897 / NBRC 102108 / NRRL B-24433 / ID139908).